Reading from the N-terminus, the 223-residue chain is GTP cyclohydrolase 1 (223 aa).

Zn(2+)-binding residues include C111, H114, and C182.

This sequence belongs to the GTP cyclohydrolase I family. As to quaternary structure, homomer.

It catalyses the reaction GTP + H2O = 7,8-dihydroneopterin 3'-triphosphate + formate + H(+). The protein operates within cofactor biosynthesis; 7,8-dihydroneopterin triphosphate biosynthesis; 7,8-dihydroneopterin triphosphate from GTP: step 1/1. This is GTP cyclohydrolase 1 from Flavobacterium johnsoniae (strain ATCC 17061 / DSM 2064 / JCM 8514 / BCRC 14874 / CCUG 350202 / NBRC 14942 / NCIMB 11054 / UW101) (Cytophaga johnsonae).